We begin with the raw amino-acid sequence, 100 residues long: NADH-quinone oxidoreductase subunit K (100 aa).

The next 3 membrane-spanning stretches (helical) occupy residues 4 to 24 (TSYYVLLSAILFTIGVLGVLL), 29 to 49 (IVIFMSVELMLNAANLALVAF), and 61 to 81 (IVFFVITVAAAEVAVGLALLV).

It belongs to the complex I subunit 4L family. NDH-1 is composed of 14 different subunits. Subunits NuoA, H, J, K, L, M, N constitute the membrane sector of the complex.

The protein resides in the cell membrane. It carries out the reaction a quinone + NADH + 5 H(+)(in) = a quinol + NAD(+) + 4 H(+)(out). Functionally, NDH-1 shuttles electrons from NADH, via FMN and iron-sulfur (Fe-S) centers, to quinones in the respiratory chain. The immediate electron acceptor for the enzyme in this species is believed to be ubiquinone. Couples the redox reaction to proton translocation (for every two electrons transferred, four hydrogen ions are translocated across the cytoplasmic membrane), and thus conserves the redox energy in a proton gradient. In Chloroflexus aggregans (strain MD-66 / DSM 9485), this protein is NADH-quinone oxidoreductase subunit K.